The following is a 391-amino-acid chain: Cytochrome P450 165A3 (391 aa).

Residues 1-22 form a disordered region; that stretch reads MFEEKNALRGTEIHRRERFDPG. C342 is a binding site for heme.

The protein belongs to the cytochrome P450 family. Requires heme as cofactor.

Its pathway is antibiotic biosynthesis; vancomycin biosynthesis. Functionally, involved in the coupling of aromatic side chains of the heptapeptide of vancomycin. This Amycolatopsis orientalis (Nocardia orientalis) protein is Cytochrome P450 165A3 (cyp165A3).